Consider the following 366-residue polypeptide: Tripartite motif-containing protein 54 (366 aa).

An RING-type zinc finger spans residues 26–82 (CPICLEMFSKPVVILPCQHNLCRKCANDVFQASNPLWQSRSSTTVSSGGRFRCPSCR). The B box-type zinc-finger motif lies at 121–163 (EQHLMCEEHEDEKINIYCLSCEVPTCSLCKVFGAHKDCEVAPL). Cysteine 126, histidine 129, cysteine 149, and histidine 155 together coordinate Zn(2+). The segment at 168–211 (KRQKSELSDGIAMLVAGNDRVQAVITQMEEVCQTIEENSRRQKQ) is mediates microtubule-binding and homooligomerization. The stretch at 185-258 (NDRVQAVITQ…LIRQYGDHLE (74 aa)) forms a coiled coil. The COS domain occupies 271–329 (MEEPQMALYLQQAKELINKVGTMSKVELAGRPEPGYERMDQFTVSVEHVAEMLRTIDFQ). The interval 326–366 (IDFQPGTSGEEEDEEVAVEGEEGNAGPEEERTDGRESTGQH) is disordered. Residues 334–347 (GEEEDEEVAVEGEE) are compositionally biased toward acidic residues. Residues 353–366 (EEERTDGRESTGQH) show a composition bias toward basic and acidic residues.

As to quaternary structure, homooligomer and heterooligomer. Interacts with TRIM63 and probably with TRIM55. Interacts with tubulin.

The protein localises to the cytoplasm. It is found in the cytoskeleton. The protein resides in the myofibril. Its subcellular location is the sarcomere. It localises to the z line. Functionally, may bind and stabilize microtubules during myotubes formation. The protein is Tripartite motif-containing protein 54 (TRIM54) of Bos taurus (Bovine).